The primary structure comprises 459 residues: Alcohol acyl transferase 1 allele GSd (459 aa).

Catalysis depends on proton acceptor residues His164 and Asn385.

The protein belongs to the plant acyltransferase family. In terms of tissue distribution, expressed at very low levels in the cortex and skin of ripe fruit.

In terms of biological role, involved in the biosynthesis of volatile esters which confer ripe apple fruit flavor. Alcohol acyl transferase that can use a wide range of alcohols as substrate to produce esters. The chain is Alcohol acyl transferase 1 allele GSd from Malus domestica (Apple).